We begin with the raw amino-acid sequence, 202 residues long: B-cell CLL/lymphoma 7 protein family member B (202 aa).

The interval 53–202 (DSKEKEKSKS…PAVPQTASES (150 aa)) is disordered. Residues 90 to 99 (ENSNQSSVSD) are compositionally biased toward polar residues. Over residues 107–123 (SSTNSSPSPQQSESLSP) the composition is skewed to low complexity. 7 positions are modified to phosphoserine: Ser-114, Ser-118, Ser-120, Ser-122, Ser-127, Ser-148, and Ser-152.

It belongs to the BCL7 family.

Its function is as follows. Positive regulator of apoptosis. Plays a role in the Wnt signaling pathway, negatively regulating the expression of Wnt signaling components CTNNB1 and HMGA1. Involved in cell cycle progression, maintenance of the nuclear structure and stem cell differentiation. May play a role in lung tumor development or progression. The protein is B-cell CLL/lymphoma 7 protein family member B (BCL7B) of Bos taurus (Bovine).